The following is a 263-amino-acid chain: uncharacterized protein (263 aa).

This sequence to B.subtilis soj.

This is an uncharacterized protein from Pseudomonas putida (strain ATCC 47054 / DSM 6125 / CFBP 8728 / NCIMB 11950 / KT2440).